Reading from the N-terminus, the 489-residue chain is Adenylosuccinate synthetase 2, chloroplastic (489 aa).

Residues 1 to 54 constitute a chloroplast transit peptide; the sequence is MPLASLSLDPAPFPLIRPAAGWSGRVLPVPGPAPRLCRPLRAAPVAPATTDEPS. GTP is bound by residues 76-82 and 104-106; these read GDEGKGK and GHT. The active-site Proton acceptor is the Asp-77. Positions 77 and 104 each coordinate Mg(2+). IMP-binding positions include 77-80, 102-105, Thr-194, Arg-208, Gln-288, Thr-303, and Arg-367; these read DEGK and NAGH. Residue His-105 is the Proton donor of the active site. 363–369 is a binding site for substrate; it reads TTTGRPR. GTP is bound by residues Arg-369, 395–397, and 478–480; these read KLD and GVG.

The protein belongs to the adenylosuccinate synthetase family. In terms of assembly, homodimer. Mg(2+) serves as cofactor.

Its subcellular location is the plastid. It is found in the chloroplast. It catalyses the reaction IMP + L-aspartate + GTP = N(6)-(1,2-dicarboxyethyl)-AMP + GDP + phosphate + 2 H(+). It participates in purine metabolism; AMP biosynthesis via de novo pathway; AMP from IMP: step 1/2. Plays an important role in the de novo pathway and in the salvage pathway of purine nucleotide biosynthesis. Catalyzes the first committed step in the biosynthesis of AMP from IMP. The chain is Adenylosuccinate synthetase 2, chloroplastic from Sorghum bicolor (Sorghum).